A 644-amino-acid polypeptide reads, in one-letter code: Core protein VP4 (644 aa).

This sequence belongs to the orbivirus VP4 family.

Its subcellular location is the virion. In terms of biological role, the VP4 protein is one of the five proteins (with VP1, VP3, VP6 and VP7) which form the inner capsid of the virus. The protein is Core protein VP4 (Segment-4) of Antilocapra americana (Pronghorn).